A 175-amino-acid polypeptide reads, in one-letter code: RNA pyrophosphohydrolase (175 aa).

The 144-residue stretch at 6–149 (GYRPNVGIIL…KRQVYQQALT (144 aa)) folds into the Nudix hydrolase domain. The Nudix box motif lies at 38–59 (GGIKHGESPEQAMYRELYEEVG).

The protein belongs to the Nudix hydrolase family. RppH subfamily. A divalent metal cation is required as a cofactor.

Accelerates the degradation of transcripts by removing pyrophosphate from the 5'-end of triphosphorylated RNA, leading to a more labile monophosphorylated state that can stimulate subsequent ribonuclease cleavage. The protein is RNA pyrophosphohydrolase of Azoarcus sp. (strain BH72).